The sequence spans 582 residues: UPF0329 protein ECU07_0070 (582 aa).

The disordered stretch occupies residues 326-386 (EEKAKSKKKG…KTGKKSKGDQ (61 aa)). The span at 330 to 339 (KSKKKGKKKS) shows a compositional bias: basic residues. Residues 344 to 354 (EAKEEEKKESG) are compositionally biased toward basic and acidic residues.

Belongs to the UPF0329 family.

This Encephalitozoon cuniculi (strain GB-M1) (Microsporidian parasite) protein is UPF0329 protein ECU07_0070.